The primary structure comprises 128 residues: Large ribosomal subunit protein bL20 (128 aa).

Belongs to the bacterial ribosomal protein bL20 family.

In terms of biological role, binds directly to 23S ribosomal RNA and is necessary for the in vitro assembly process of the 50S ribosomal subunit. It is not involved in the protein synthesizing functions of that subunit. This Anaplasma phagocytophilum (strain HZ) protein is Large ribosomal subunit protein bL20.